Here is a 201-residue protein sequence, read N- to C-terminus: ATP-dependent Clp protease proteolytic subunit 2 (201 aa).

The Nucleophile role is filled by Ser-98. His-123 is a catalytic residue.

Belongs to the peptidase S14 family. In terms of assembly, fourteen ClpP subunits assemble into 2 heptameric rings which stack back to back to give a disk-like structure with a central cavity, resembling the structure of eukaryotic proteasomes.

The protein resides in the cytoplasm. The enzyme catalyses Hydrolysis of proteins to small peptides in the presence of ATP and magnesium. alpha-casein is the usual test substrate. In the absence of ATP, only oligopeptides shorter than five residues are hydrolyzed (such as succinyl-Leu-Tyr-|-NHMec, and Leu-Tyr-Leu-|-Tyr-Trp, in which cleavage of the -Tyr-|-Leu- and -Tyr-|-Trp bonds also occurs).. Cleaves peptides in various proteins in a process that requires ATP hydrolysis. Has a chymotrypsin-like activity. Plays a major role in the degradation of misfolded proteins. This chain is ATP-dependent Clp protease proteolytic subunit 2, found in Rhizobium johnstonii (strain DSM 114642 / LMG 32736 / 3841) (Rhizobium leguminosarum bv. viciae).